Reading from the N-terminus, the 166-residue chain is CDP-archaeol synthase (166 aa).

5 helical membrane passes run L7–I27, L55–A75, T78–I98, L116–Y136, and F138–L158.

It belongs to the CDP-archaeol synthase family. Mg(2+) is required as a cofactor.

It localises to the cell membrane. It catalyses the reaction 2,3-bis-O-(geranylgeranyl)-sn-glycerol 1-phosphate + CTP + H(+) = CDP-2,3-bis-O-(geranylgeranyl)-sn-glycerol + diphosphate. It participates in membrane lipid metabolism; glycerophospholipid metabolism. In terms of biological role, catalyzes the formation of CDP-2,3-bis-(O-geranylgeranyl)-sn-glycerol (CDP-archaeol) from 2,3-bis-(O-geranylgeranyl)-sn-glycerol 1-phosphate (DGGGP) and CTP. This reaction is the third ether-bond-formation step in the biosynthesis of archaeal membrane lipids. The polypeptide is CDP-archaeol synthase (Saccharolobus islandicus (strain Y.N.15.51 / Yellowstone #2) (Sulfolobus islandicus)).